A 399-amino-acid chain; its full sequence is MKRFQWVLLLAVLIIAGRAEIVQAAGNAEQTEDHAETAEQLAERTAASLETDKIGEFWNDIMTEYGGLLPESQKGSLMEFINGDKSFSPQEWLKALFSYLFHEVLANGKLLGTLILLTIFCVILQLLQNAFQQSTVSKVAYSIVYMVLIILALNSFHVAINYATEAIQTMTSFILALIPLLLALLASSGGAVSAAFFHPVILFLMNTSGLLIQNIVMPLIFLSAILSIVSTMTEQYKVTQLANLLRNIAIGALAVFLTIFLGVISVQGASAAVTDGITLRTAKFITGNFIPVLGRMFTDATDTVISASLLLKNTVGILGVAILICIAAFPAIKVLSLAFIYKLAAAILQPLGGGPVITCLDVISKSVIYIFAALAIVSLMFFLSLTVIITAGNLTMMMK.

The signal sequence occupies residues 1 to 24 (MKRFQWVLLLAVLIIAGRAEIVQA). Transmembrane regions (helical) follow at residues 104-124 (VLAN…CVIL), 140-160 (AYSI…HVAI), 172-192 (SFIL…GGAV), 209-229 (GLLI…LSIV), 248-268 (IAIG…SVQG), 315-335 (VGIL…IKVL), and 368-388 (IYIF…LTVI).

As to quaternary structure, interacts with SpoIIIJ and YqjG.

Its subcellular location is the cell membrane. Functionally, required during sporulation for activation of sigma factor SpoIIIG/SigG after engulfment is completed in the prespore. Overexpression in the absence of SpoIIIJ is synthetically lethal. The sequence is that of Stage III sporulation protein AE (spoIIIAE) from Bacillus subtilis (strain 168).